A 162-amino-acid polypeptide reads, in one-letter code: Phenazine biosynthesis protein PhzB1 (162 aa).

This sequence belongs to the PhzA/PhzB family. Homodimer.

It functions in the pathway antibiotic biosynthesis; phenazine biosynthesis. In terms of biological role, involved in the biosynthesis of the antibiotic phenazine, a nitrogen-containing heterocyclic molecule. PhzB1 (operon phzA1B1C1E1F1G1) has a role in the biosynthesis of the phenazine during planktonic growth. The sequence is that of Phenazine biosynthesis protein PhzB1 from Pseudomonas aeruginosa (strain ATCC 15692 / DSM 22644 / CIP 104116 / JCM 14847 / LMG 12228 / 1C / PRS 101 / PAO1).